Here is a 156-residue protein sequence, read N- to C-terminus: Ribosomal RNA large subunit methyltransferase H (156 aa).

S-adenosyl-L-methionine-binding positions include leucine 73, glycine 104, and 123-128 (LSALTM).

This sequence belongs to the RNA methyltransferase RlmH family. As to quaternary structure, homodimer.

The protein resides in the cytoplasm. The catalysed reaction is pseudouridine(1915) in 23S rRNA + S-adenosyl-L-methionine = N(3)-methylpseudouridine(1915) in 23S rRNA + S-adenosyl-L-homocysteine + H(+). Functionally, specifically methylates the pseudouridine at position 1915 (m3Psi1915) in 23S rRNA. The sequence is that of Ribosomal RNA large subunit methyltransferase H from Tolumonas auensis (strain DSM 9187 / NBRC 110442 / TA 4).